Reading from the N-terminus, the 434-residue chain is Glutamyl-tRNA reductase (434 aa).

Residues 57–60 (TCNR), Ser-116, 121–123 (ETQ), and Gln-127 contribute to the substrate site. The active-site Nucleophile is the Cys-58. 196-201 (GAGEMI) contacts NADP(+).

The protein belongs to the glutamyl-tRNA reductase family. Homodimer.

It catalyses the reaction (S)-4-amino-5-oxopentanoate + tRNA(Glu) + NADP(+) = L-glutamyl-tRNA(Glu) + NADPH + H(+). Its pathway is porphyrin-containing compound metabolism; protoporphyrin-IX biosynthesis; 5-aminolevulinate from L-glutamyl-tRNA(Glu): step 1/2. In terms of biological role, catalyzes the NADPH-dependent reduction of glutamyl-tRNA(Glu) to glutamate 1-semialdehyde (GSA). The protein is Glutamyl-tRNA reductase of Burkholderia pseudomallei (strain 1106a).